The sequence spans 342 residues: MTNLTLALDAMGGDFGPRITVPASLQALRLNPLLKIVLVGDKTQIDEYIASAEPAIKRRIEIKHTTEVVAMSDRPVHALRNRKQSSMRLAIELVRDGKAQACLSAGNTGALMAMSKVLLKTLPGIDRPALVSCLPAVNNTPVYLLDLGANISCDSETLFQFAVMGSVLCETVDKTVSPKVALLNVGIEEIKGNDQVQQAGQLLQQIPQINYTGFIEGDEIYSGNVDVIVCDGFVGNITLKTSEGIARLLIHQLKKSLSDGFFVKILAKIIAPRIRSLLNQMNPDHYNGASLIGLRGIVVKSHGCADEAAFLQAITLAVTEAQRRLPQMIEDRLESILLDINS.

Belongs to the PlsX family. Homodimer. Probably interacts with PlsY.

Its subcellular location is the cytoplasm. The enzyme catalyses a fatty acyl-[ACP] + phosphate = an acyl phosphate + holo-[ACP]. It functions in the pathway lipid metabolism; phospholipid metabolism. Its function is as follows. Catalyzes the reversible formation of acyl-phosphate (acyl-PO(4)) from acyl-[acyl-carrier-protein] (acyl-ACP). This enzyme utilizes acyl-ACP as fatty acyl donor, but not acyl-CoA. The polypeptide is Phosphate acyltransferase (Shewanella pealeana (strain ATCC 700345 / ANG-SQ1)).